A 520-amino-acid chain; its full sequence is GMP synthase [glutamine-hydrolyzing] (520 aa).

Residues 9-202 (SVLIVDFGSQ…IHNIAGIKGD (194 aa)) form the Glutamine amidotransferase type-1 domain. The Nucleophile role is filled by C86. Residues H176 and E178 contribute to the active site. Positions 203 to 395 (WSMSAYRQKA…LGLPDSFIGR (193 aa)) constitute a GMPS ATP-PPase domain. 230 to 236 (SGGVDSS) is an ATP binding site.

As to quaternary structure, homodimer.

The catalysed reaction is XMP + L-glutamine + ATP + H2O = GMP + L-glutamate + AMP + diphosphate + 2 H(+). It participates in purine metabolism; GMP biosynthesis; GMP from XMP (L-Gln route): step 1/1. Catalyzes the synthesis of GMP from XMP. This is GMP synthase [glutamine-hydrolyzing] from Rhizobium etli (strain CIAT 652).